A 147-amino-acid chain; its full sequence is MNRNDVTEKIITVKVSKGIQWADVAKKVGLSKEWTTAACLGQMTLDDKQAKVIGKIFGLTAEEQKWLQVVPYKGSLPTPVPTDPLIYRWYEVVSVYGTTIKELIHEEFGDGIMSAIDFSMDIQRQADPKGDRVNVVLSGKFLPYKTY.

Active-site residues include Arg88, Glu91, and Ser114.

It belongs to the cyanase family.

It catalyses the reaction cyanate + hydrogencarbonate + 3 H(+) = NH4(+) + 2 CO2. Catalyzes the reaction of cyanate with bicarbonate to produce ammonia and carbon dioxide. This Variovorax paradoxus (strain S110) protein is Cyanate hydratase.